Reading from the N-terminus, the 271-residue chain is MTTTAKTDDIPIDTVILDIEGTVCPITFVKDTLFPYFIEKLPSILDKFQYPLSNTSASSDDQVLNILKQLPDNITKSSESIYKHFKNLVDQDIKDPILKSLQGLIWKQGYENNELQAPIYQDSVEFIESFPTKSSTNNKIYIYSSGSIKAQILLFGHVKSTTTTTTTTTTITNEVIDLNPKLNGYFDITTAGFKNQSNSYKKILQEINKSSTPKSVLFLSDNINEVNAAIEAGMKSYIVIRPGNPPIDDDDDGNDDKINHKIIYSLDELDL.

Residues D18 and E20 each coordinate Mg(2+). Substrate-binding positions include 144–145 (SS) and K194. A Mg(2+)-binding site is contributed by D221.

It belongs to the HAD-like hydrolase superfamily. MasA/MtnC family. In terms of assembly, monomer. Requires Mg(2+) as cofactor.

It is found in the cytoplasm. Its subcellular location is the nucleus. It carries out the reaction 5-methylsulfanyl-2,3-dioxopentyl phosphate + H2O = 1,2-dihydroxy-5-(methylsulfanyl)pent-1-en-3-one + phosphate. The protein operates within amino-acid biosynthesis; L-methionine biosynthesis via salvage pathway; L-methionine from S-methyl-5-thio-alpha-D-ribose 1-phosphate: step 3/6. It participates in amino-acid biosynthesis; L-methionine biosynthesis via salvage pathway; L-methionine from S-methyl-5-thio-alpha-D-ribose 1-phosphate: step 4/6. Its function is as follows. Bifunctional enzyme that catalyzes the enolization of 2,3-diketo-5-methylthiopentyl-1-phosphate (DK-MTP-1-P) into the intermediate 2-hydroxy-3-keto-5-methylthiopentenyl-1-phosphate (HK-MTPenyl-1-P), which is then dephosphorylated to form the acireductone 1,2-dihydroxy-3-keto-5-methylthiopentene (DHK-MTPene). The sequence is that of Enolase-phosphatase E1 from Candida albicans (strain WO-1) (Yeast).